A 198-amino-acid chain; its full sequence is Glycerol-3-phosphate acyltransferase (198 aa).

Helical transmembrane passes span 10 to 30, 57 to 77, 86 to 106, 118 to 138, and 160 to 180; these read LIPI…WILV, GISF…ILIL, IMYL…WFLF, VVLS…AVVF, and AVTE…IVLI.

This sequence belongs to the PlsY family. As to quaternary structure, probably interacts with PlsX.

It localises to the cell inner membrane. The catalysed reaction is an acyl phosphate + sn-glycerol 3-phosphate = a 1-acyl-sn-glycero-3-phosphate + phosphate. Its pathway is lipid metabolism; phospholipid metabolism. Its function is as follows. Catalyzes the transfer of an acyl group from acyl-phosphate (acyl-PO(4)) to glycerol-3-phosphate (G3P) to form lysophosphatidic acid (LPA). This enzyme utilizes acyl-phosphate as fatty acyl donor, but not acyl-CoA or acyl-ACP. The polypeptide is Glycerol-3-phosphate acyltransferase (Anaplasma marginale (strain St. Maries)).